A 106-amino-acid chain; its full sequence is Protein translocase subunit SecE (106 aa).

A run of 2 helical transmembrane segments spans residues Leu-20–Ile-40 and Ile-75–Val-95.

This sequence belongs to the SecE/SEC61-gamma family. In terms of assembly, component of the Sec protein translocase complex. Heterotrimer consisting of SecY, SecE and SecG subunits. The heterotrimers can form oligomers, although 1 heterotrimer is thought to be able to translocate proteins. Interacts with the ribosome. Interacts with SecDF, and other proteins may be involved. Interacts with SecA.

Its subcellular location is the cell inner membrane. Its function is as follows. Essential subunit of the Sec protein translocation channel SecYEG. Clamps together the 2 halves of SecY. May contact the channel plug during translocation. The sequence is that of Protein translocase subunit SecE from Haemophilus influenzae (strain ATCC 51907 / DSM 11121 / KW20 / Rd).